Here is a 165-residue protein sequence, read N- to C-terminus: Ribosomal RNA large subunit methyltransferase H (165 aa).

S-adenosyl-L-methionine is bound at residue Gly109.

The protein belongs to the RNA methyltransferase RlmH family. In terms of assembly, homodimer.

Its subcellular location is the cytoplasm. The catalysed reaction is pseudouridine(1915) in 23S rRNA + S-adenosyl-L-methionine = N(3)-methylpseudouridine(1915) in 23S rRNA + S-adenosyl-L-homocysteine + H(+). Specifically methylates the pseudouridine at position 1915 (m3Psi1915) in 23S rRNA. The sequence is that of Ribosomal RNA large subunit methyltransferase H from Methylorubrum populi (strain ATCC BAA-705 / NCIMB 13946 / BJ001) (Methylobacterium populi).